Reading from the N-terminus, the 127-residue chain is Nitrogenase-stabilizing/protective protein NifW (127 aa).

This sequence belongs to the NifW family. In terms of assembly, homotrimer; associates with NifD.

In terms of biological role, may protect the nitrogenase Fe-Mo protein from oxidative damage. The sequence is that of Nitrogenase-stabilizing/protective protein NifW from Rhizobium etli (strain ATCC 51251 / DSM 11541 / JCM 21823 / NBRC 15573 / CFN 42).